We begin with the raw amino-acid sequence, 588 residues long: Polyamine deacetylase HDAC10 (588 aa).

The histone deacetylase stretch occupies residues 1-302 (MGTALVYHED…AGGRICAVLE (302 aa)). Histidine 135 is a catalytic residue.

The protein belongs to the histone deacetylase family. HD type 2 subfamily. In terms of assembly, interacts with HDAC3. Interacts with HDAC2 and NCOR2/SMRT. Interacts with HSPA8/HSC70. Interacts with MSH2.

Its subcellular location is the cytoplasm. It localises to the nucleus. The catalysed reaction is N(8)-acetylspermidine + H2O = spermidine + acetate. The enzyme catalyses N-acetylputrescine + H2O = putrescine + acetate. It catalyses the reaction N-acetylcadaverine + H2O = cadaverine + acetate. It carries out the reaction N(6)-acetyl-L-lysyl-[protein] + H2O = L-lysyl-[protein] + acetate. Its function is as follows. Polyamine deacetylase (PDAC), which acts preferentially on N(8)-acetylspermidine, and also on acetylcadaverine and acetylputrescine. Exhibits attenuated catalytic activity toward N(1),N(8)-diacetylspermidine and very low activity, if any, toward N(1)-acetylspermidine. Histone deacetylase activity has been observed in vitro. Has also been shown to be involved in MSH2 deacetylation. The physiological relevance of protein/histone deacetylase activity is unclear and could be very weak. May play a role in the promotion of late stages of autophagy, possibly autophagosome-lysosome fusion and/or lysosomal exocytosis in neuroblastoma cells. May play a role in homologous recombination. May promote DNA mismatch repair. In Rattus norvegicus (Rat), this protein is Polyamine deacetylase HDAC10 (Hdac10).